The primary structure comprises 341 residues: Glucokinase (341 aa).

18–23 (GDIGGT) lines the ATP pocket.

The protein belongs to the bacterial glucokinase family.

The protein resides in the cytoplasm. The enzyme catalyses D-glucose + ATP = D-glucose 6-phosphate + ADP + H(+). The chain is Glucokinase from Rhizobium etli (strain ATCC 51251 / DSM 11541 / JCM 21823 / NBRC 15573 / CFN 42).